Consider the following 424-residue polypeptide: Type II methyltransferase M.XorII (424 aa).

The 364-residue stretch at 4–367 folds into the SAM-dependent MTase C5-type domain; sequence PIGIDLFAGA…GQIMKALRKK (364 aa). Cysteine 83 is an active-site residue. The segment at 404–424 is disordered; sequence RSRPVDRPAPRRHEERELVTA. The span at 406-424 shows a compositional bias: basic and acidic residues; sequence RPVDRPAPRRHEERELVTA.

This sequence belongs to the class I-like SAM-binding methyltransferase superfamily. C5-methyltransferase family.

It carries out the reaction a 2'-deoxycytidine in DNA + S-adenosyl-L-methionine = a 5-methyl-2'-deoxycytidine in DNA + S-adenosyl-L-homocysteine + H(+). Its function is as follows. A methylase that recognizes the double-stranded sequence 5'-CGATCG-3', methylates C-? on both strands and protects the DNA from cleavage by the XorII endonuclease. The polypeptide is Type II methyltransferase M.XorII (xorIIM) (Xanthomonas oryzae pv. oryzae (strain KACC10331 / KXO85)).